Here is a 67-residue protein sequence, read N- to C-terminus: Large ribosomal subunit protein bL32 (67 aa).

The span at 1-19 (MAVPKRKMSRSNTRARRSQ) shows a compositional bias: basic residues. Residues 1–21 (MAVPKRKMSRSNTRARRSQWK) form a disordered region.

It belongs to the bacterial ribosomal protein bL32 family.

The sequence is that of Large ribosomal subunit protein bL32 from Clavibacter sepedonicus (Clavibacter michiganensis subsp. sepedonicus).